Reading from the N-terminus, the 465-residue chain is Keratin, type I cytoskeletal 13 (465 aa).

Over residues 1–28 (MNFTSFSITQGSRPQPPSTRGFSGNSFK) the composition is skewed to polar residues. The disordered stretch occupies residues 1–47 (MNFTSFSITQGSRPQPPSTRGFSGNSFKSDLIPQSRRSHSVYGTPGS). The head stretch occupies residues 1–98 (MNFTSFSITQ…SGGSDLLLGT (98 aa)). A coil 1A region spans residues 99–135 (SGKEAMQNLNDRLASYLEKVRSLEERNRELEQKIREW). In terms of domain architecture, IF rod spans 100-412 (GKEAMQNLND…ILLEGDEGKF (313 aa)). The interval 136–154 (YEKQGAGTKTKDFSHYFKI) is linker 1. Positions 155–246 (IADLQKQIHD…KSHDEEMKAL (92 aa)) are coil 1B. The segment at 247–269 (RSQLGGQVNVEVDAAPAEDLTKK) is linker 12. Residues 270 to 408 (LERMRQQYEQ…RTYRILLEGD (139 aa)) form a coil 2 region. Residues 409 to 465 (EGKFQTSPHHPSIVTKQTETVVTPVVITNVKTVVEEIIDGKIVSKKEYPGPPEKLMI) form a tail region.

Belongs to the intermediate filament family. Heterotetramer of two type I and two type II keratins. Expressed in skin.

Type 1 keratin. May maintain oral mucosal cell homeostasis and tissue organization in response to mechanical stress. This is Keratin, type I cytoskeletal 13 (KRT13) from Protopterus aethiopicus (Marbled lungfish).